The following is a 265-amino-acid chain: Secreted RxLR effector protein 146 (265 aa).

Residues 1 to 25 (MRYYTQVVAASLVATLAVVDSIVFA) form the signal peptide. A RxLR-dEER motif is present at residues 32 to 50 (RFLRQDGATVTRGGKGEER). Residues Asn71 and Asn148 are each glycosylated (N-linked (GlcNAc...) asparagine).

Belongs to the RxLR effector family.

The protein localises to the secreted. Its subcellular location is the host nucleus. The protein resides in the host cytoplasm. Secreted effector that completely suppresses the host cell death induced by cell death-inducing proteins. In Plasmopara viticola (Downy mildew of grapevine), this protein is Secreted RxLR effector protein 146.